The sequence spans 321 residues: Mas-related G-protein coupled receptor member B4 (321 aa).

The Extracellular portion of the chain corresponds to 1–33 (MGTTTLAWNINNTAENGSYTEMFSCITKFNTLN). Residues Asn-11 and Asn-16 are each glycosylated (N-linked (GlcNAc...) asparagine). The chain crosses the membrane as a helical span at residues 34–54 (FLTVIIAVVGLAGNGIVLWLL). Over 55–62 (AFHLHRNA) the chain is Cytoplasmic. The helical transmembrane segment at 63 to 83 (FSVYVLNLAGADFLYLFTQVV) threads the bilayer. Residues 84-97 (HSLECVLQLDNNSF) lie on the Extracellular side of the membrane. An N-linked (GlcNAc...) asparagine glycan is attached at Asn-94. The chain crosses the membrane as a helical span at residues 98-118 (YILLIVTMFAYLAGLCMIAAI). Residues 119–146 (SAERCLSVMWPIWYHCQRPRHTSAIMCA) are Cytoplasmic-facing. Residues 147-167 (LVWVSSLLLSLVVGLGCGFLF) traverse the membrane as a helical segment. The Extracellular segment spans residues 168-172 (SYYDY). A helical membrane pass occupies residues 173–193 (YFCITLNFITAAFLIVLSVVL). The Cytoplasmic segment spans residues 194–215 (SVSSLALLVKIVWGSHRIPVTR). The helical transmembrane segment at 216–236 (FFVTIALTVVVFIYFGMPFGI) threads the bilayer. The Extracellular portion of the chain corresponds to 237–257 (CWFLLSRIMEFDSIFFNNVYE). A helical membrane pass occupies residues 258-278 (IIEFLSCVNSCANPIIYFLVG). Over 279-321 (SIRQHRLRWQSLKLLLQRAMQDTPEEESGERGPSQRSGELETV) the chain is Cytoplasmic. Residues 299 to 321 (QDTPEEESGERGPSQRSGELETV) form a disordered region.

It belongs to the G-protein coupled receptor 1 family. Mas subfamily.

The protein resides in the membrane. Functionally, orphan receptor. Probably involved in the function of nociceptive neurons. May regulate nociceptor function and/or development, including the sensation or modulation of pain. In Mus musculus (Mouse), this protein is Mas-related G-protein coupled receptor member B4 (Mrgprb4).